Here is a 288-residue protein sequence, read N- to C-terminus: Pyridoxal kinase PdxY (288 aa).

Residues Ser12 and 47–48 (TQ) each bind substrate. ATP is bound by residues Asp114, Glu151, Lys184, and 211–214 (RPLL). Residue Asp225 participates in substrate binding.

This sequence belongs to the pyridoxine kinase family. PdxY subfamily. In terms of assembly, homodimer. Requires Mg(2+) as cofactor.

It catalyses the reaction pyridoxal + ATP = pyridoxal 5'-phosphate + ADP + H(+). It functions in the pathway cofactor metabolism; pyridoxal 5'-phosphate salvage; pyridoxal 5'-phosphate from pyridoxal: step 1/1. Functionally, pyridoxal kinase involved in the salvage pathway of pyridoxal 5'-phosphate (PLP). Catalyzes the phosphorylation of pyridoxal to PLP. The sequence is that of Pyridoxal kinase PdxY from Pseudomonas syringae pv. syringae (strain B728a).